A 351-amino-acid chain; its full sequence is Peptide chain release factor 1 (351 aa).

Q229 bears the N5-methylglutamine mark.

Belongs to the prokaryotic/mitochondrial release factor family. Post-translationally, methylated by PrmC. Methylation increases the termination efficiency of RF1.

The protein localises to the cytoplasm. Its function is as follows. Peptide chain release factor 1 directs the termination of translation in response to the peptide chain termination codons UAG and UAA. This Cereibacter sphaeroides (strain ATCC 17023 / DSM 158 / JCM 6121 / CCUG 31486 / LMG 2827 / NBRC 12203 / NCIMB 8253 / ATH 2.4.1.) (Rhodobacter sphaeroides) protein is Peptide chain release factor 1.